A 149-amino-acid polypeptide reads, in one-letter code: Small ribosomal subunit protein uS15 (149 aa).

Residues 1–11 (MARMHSRDRGK) are compositionally biased toward basic and acidic residues. A disordered region spans residues 1–25 (MARMHSRDRGKSGSTRPPRVAPPSW).

The protein belongs to the universal ribosomal protein uS15 family. As to quaternary structure, part of the 30S ribosomal subunit.

In Methanopyrus kandleri (strain AV19 / DSM 6324 / JCM 9639 / NBRC 100938), this protein is Small ribosomal subunit protein uS15.